Consider the following 175-residue polypeptide: Ribonuclease M5 (175 aa).

A Toprim domain is found at 3 to 83 (NEIIIVEGKS…DVDVFNAFVS (81 aa)). Glutamate 9, aspartate 57, and aspartate 59 together coordinate Mg(2+).

Belongs to the ribonuclease M5 family. The cofactor is Mg(2+).

The protein resides in the cytoplasm. The catalysed reaction is Endonucleolytic cleavage of RNA, removing 21 and 42 nucleotides, respectively, from the 5'- and 3'-termini of a 5S-rRNA precursor.. Functionally, required for correct processing of both the 5' and 3' ends of 5S rRNA precursor. Cleaves both sides of a double-stranded region yielding mature 5S rRNA in one step. The sequence is that of Ribonuclease M5 from Mesoplasma florum (strain ATCC 33453 / NBRC 100688 / NCTC 11704 / L1) (Acholeplasma florum).